Here is a 441-residue protein sequence, read N- to C-terminus: Ribosomal protein uS12 methylthiotransferase RimO (441 aa).

The MTTase N-terminal domain occupies 8–118; sequence PKIGFVSLGC…VLEHVHHYVP (111 aa). Residues Cys-17, Cys-53, Cys-82, Cys-150, Cys-154, and Cys-157 each contribute to the [4Fe-4S] cluster site. The Radical SAM core domain maps to 136-373; sequence LTPRHYAYLK…MQLQQQISAE (238 aa). The 66-residue stretch at 376–441 folds into the TRAM domain; the sequence is QEKVGREILV…DEYDLWGSRV (66 aa).

Belongs to the methylthiotransferase family. RimO subfamily. It depends on [4Fe-4S] cluster as a cofactor.

The protein localises to the cytoplasm. The enzyme catalyses L-aspartate(89)-[ribosomal protein uS12]-hydrogen + (sulfur carrier)-SH + AH2 + 2 S-adenosyl-L-methionine = 3-methylsulfanyl-L-aspartate(89)-[ribosomal protein uS12]-hydrogen + (sulfur carrier)-H + 5'-deoxyadenosine + L-methionine + A + S-adenosyl-L-homocysteine + 2 H(+). In terms of biological role, catalyzes the methylthiolation of an aspartic acid residue of ribosomal protein uS12. The chain is Ribosomal protein uS12 methylthiotransferase RimO from Citrobacter koseri (strain ATCC BAA-895 / CDC 4225-83 / SGSC4696).